The sequence spans 390 residues: Stearoyl-[acyl-carrier-protein] 9-desaturase, chloroplastic (390 aa).

The transit peptide at 1-27 (MALKLCFPPHKMPSFPDARIRSHRVFM) directs the protein to the chloroplast. Positions 132, 170, 173, 223, 256, and 259 each coordinate Fe cation.

This sequence belongs to the fatty acid desaturase type 2 family. In terms of assembly, homodimer. It depends on Fe(2+) as a cofactor.

The protein resides in the plastid. Its subcellular location is the chloroplast. It carries out the reaction octadecanoyl-[ACP] + 2 reduced [2Fe-2S]-[ferredoxin] + O2 + 2 H(+) = (9Z)-octadecenoyl-[ACP] + 2 oxidized [2Fe-2S]-[ferredoxin] + 2 H2O. It participates in lipid metabolism; fatty acid metabolism. Converts stearoyl-ACP to oleoyl-ACP by introduction of a cis double bond between carbons 9 and 10 of the acyl chain. In Olea europaea (Common olive), this protein is Stearoyl-[acyl-carrier-protein] 9-desaturase, chloroplastic.